The primary structure comprises 80 residues: RNA-binding protein Hfq (80 aa).

Positions 7-67 (ESFLNTARKK…ITTIVPHERL (61 aa)) constitute a Sm domain.

Belongs to the Hfq family. As to quaternary structure, homohexamer.

Its function is as follows. RNA chaperone that binds small regulatory RNA (sRNAs) and mRNAs to facilitate mRNA translational regulation in response to envelope stress, environmental stress and changes in metabolite concentrations. Also binds with high specificity to tRNAs. This chain is RNA-binding protein Hfq, found in Aquifex aeolicus (strain VF5).